Here is a 141-residue protein sequence, read N- to C-terminus: Large ribosomal subunit protein uL14 (141 aa).

Belongs to the universal ribosomal protein uL14 family. As to quaternary structure, part of the 50S ribosomal subunit. Forms a cluster with proteins L3 and L24e, part of which may contact the 16S rRNA in 2 intersubunit bridges.

Functionally, binds to 23S rRNA. Forms part of two intersubunit bridges in the 70S ribosome. This is Large ribosomal subunit protein uL14 from Pyrococcus furiosus (strain ATCC 43587 / DSM 3638 / JCM 8422 / Vc1).